The following is a 226-amino-acid chain: Deoxyribose-phosphate aldolase (226 aa).

D84 serves as the catalytic Proton donor/acceptor. K146 acts as the Schiff-base intermediate with acetaldehyde in catalysis. Catalysis depends on K188, which acts as the Proton donor/acceptor.

Belongs to the DeoC/FbaB aldolase family. DeoC type 1 subfamily. As to quaternary structure, homodimer.

The protein resides in the cytoplasm. The enzyme catalyses 2-deoxy-D-ribose 5-phosphate = D-glyceraldehyde 3-phosphate + acetaldehyde. Its pathway is carbohydrate degradation; 2-deoxy-D-ribose 1-phosphate degradation; D-glyceraldehyde 3-phosphate and acetaldehyde from 2-deoxy-alpha-D-ribose 1-phosphate: step 2/2. Functionally, catalyzes a reversible aldol reaction between acetaldehyde and D-glyceraldehyde 3-phosphate to generate 2-deoxy-D-ribose 5-phosphate. This chain is Deoxyribose-phosphate aldolase, found in Pyrobaculum aerophilum (strain ATCC 51768 / DSM 7523 / JCM 9630 / CIP 104966 / NBRC 100827 / IM2).